A 437-amino-acid polypeptide reads, in one-letter code: GTPase Obg (437 aa).

Residues 2–160 (SMFLDTAKIS…RQLELELKIL (159 aa)) form the Obg domain. The 178-residue stretch at 161–338 (ADVGLVGFPS…LLEATAELLA (178 aa)) folds into the OBG-type G domain. GTP contacts are provided by residues 167–174 (GFPSVGKS), 192–196 (FTTIV), 214–217 (DLPG), 284–287 (NKMD), and 319–321 (SSL). The Mg(2+) site is built by serine 174 and threonine 194. The 79-residue stretch at 359–437 (GFAETEKNFE…IGKFEFEFVD (79 aa)) folds into the OCT domain.

This sequence belongs to the TRAFAC class OBG-HflX-like GTPase superfamily. OBG GTPase family. Monomer. Mg(2+) serves as cofactor.

It is found in the cytoplasm. Functionally, an essential GTPase which binds GTP, GDP and possibly (p)ppGpp with moderate affinity, with high nucleotide exchange rates and a fairly low GTP hydrolysis rate. Plays a role in control of the cell cycle, stress response, ribosome biogenesis and in those bacteria that undergo differentiation, in morphogenesis control. This Streptococcus pyogenes serotype M49 (strain NZ131) protein is GTPase Obg.